We begin with the raw amino-acid sequence, 450 residues long: MRPFSLEVSLHLPWAMAAHLLPVCTLFLNLLSMTQGSRDPVVPNQPFTTIWNANTEWCMKKHGVDVDISIFDVVTNPGQTFRGPNMTIFYSSQLGTYPYYTSAGEPVFGGLPQNASLNAHLARTFQDILAAMPEPRFSGLAVIDWEAWRPRWAFNWDTKDIYRQRSRALVQKQHPDWLAPRVEAAAQDQFEGAAEEWMAGTLKLGQALRPQGLWGFYNFPECYNYDFKSPNYTGRCPLNICAQNDQLGWLWGQSRALYPSIYLPAALEGTKKTQMFVQHRVAEAFRVAAGAGDPKLPVLPYMQLFYDMTNHFLPAEELEHSLGESAAQGAAGVVLWVSWLSTSTKESCQAIKEYVDTTLGPSILNVTSGARLCSQVLCSGHGRCARRPSYPKARLILNSTSFSIKPTPGGGPLTLQGALSLEDRLRMAVEFECRCYRGWRGTRCEQWGMW.

A signal peptide spans methionine 1–glutamine 35. Cystine bridges form between cysteine 58-cysteine 348 and cysteine 222-cysteine 236. An N-linked (GlcNAc...) asparagine glycan is attached at asparagine 85. The active-site Proton donor is the glutamate 146. Residues asparagine 231 and asparagine 365 are each glycosylated (N-linked (GlcNAc...) asparagine). 3 disulfide bridges follow: cysteine 373–cysteine 384, cysteine 378–cysteine 433, and cysteine 435–cysteine 444. N-linked (GlcNAc...) asparagine glycosylation is present at asparagine 398. The region spanning cysteine 433–cysteine 444 is the EGF-like domain.

This sequence belongs to the glycosyl hydrolase 56 family.

The protein resides in the secreted. The protein localises to the lysosome. The enzyme catalyses Random hydrolysis of (1-&gt;4)-linkages between N-acetyl-beta-D-glucosamine and D-glucuronate residues in hyaluronate.. May have a role in promoting tumor progression. May block the TGFB1-enhanced cell growth. The chain is Hyaluronidase-1 (HYAL1) from Bos taurus (Bovine).